Here is an 83-residue protein sequence, read N- to C-terminus: Host transcription reprogramming factor 9 (83 aa).

Positions 1-19 (MQFSKITLAIVLYALGTAA) are cleaved as a signal peptide. The C2H2-type zinc-finger motif lies at 54-77 (YRCDKCEKEFVKGNDFFNHGGRGH).

It is found in the secreted. The protein localises to the host nucleus. In terms of biological role, probable secreted effector that translocates into the nuclei of host cells to reprogram the expression of targeted genes by binding on effector binding elements in rice. This chain is Host transcription reprogramming factor 9, found in Pyricularia oryzae (strain 70-15 / ATCC MYA-4617 / FGSC 8958) (Rice blast fungus).